The chain runs to 198 residues: MRLVLASQSPSRLSILRGAGVEPVIAPAHVDERAIEERLAGAEPAEIVCALAAAKAEAIAPDYPEDVVVGGDSMLLLDGSLQGKPHTPEATVERWHAQAGRAAELITGHCVLYGEERFVEASRTTVHFAQASDADIEAYARTGEPLECAGAFTLEALGGWFIDRIEGDPSSVIGLSLPVLRRALYSFGLNVSEFWAQH.

The active-site Proton acceptor is Asp-72.

This sequence belongs to the Maf family. A divalent metal cation is required as a cofactor.

Its subcellular location is the cytoplasm. It catalyses the reaction a ribonucleoside 5'-triphosphate + H2O = a ribonucleoside 5'-phosphate + diphosphate + H(+). The enzyme catalyses a 2'-deoxyribonucleoside 5'-triphosphate + H2O = a 2'-deoxyribonucleoside 5'-phosphate + diphosphate + H(+). In terms of biological role, nucleoside triphosphate pyrophosphatase. May have a dual role in cell division arrest and in preventing the incorporation of modified nucleotides into cellular nucleic acids. This chain is Nucleoside triphosphate pyrophosphatase, found in Corynebacterium aurimucosum (strain ATCC 700975 / DSM 44827 / CIP 107346 / CN-1) (Corynebacterium nigricans).